We begin with the raw amino-acid sequence, 323 residues long: tRNA U34 carboxymethyltransferase (323 aa).

Residues K91, W105, K110, G130, 152 to 154 (DPT), 181 to 182 (IE), M196, Y200, and R315 each bind carboxy-S-adenosyl-L-methionine.

The protein belongs to the class I-like SAM-binding methyltransferase superfamily. CmoB family. As to quaternary structure, homotetramer.

The catalysed reaction is carboxy-S-adenosyl-L-methionine + 5-hydroxyuridine(34) in tRNA = 5-carboxymethoxyuridine(34) in tRNA + S-adenosyl-L-homocysteine + H(+). In terms of biological role, catalyzes carboxymethyl transfer from carboxy-S-adenosyl-L-methionine (Cx-SAM) to 5-hydroxyuridine (ho5U) to form 5-carboxymethoxyuridine (cmo5U) at position 34 in tRNAs. This is tRNA U34 carboxymethyltransferase from Shigella flexneri serotype 5b (strain 8401).